The sequence spans 178 residues: Large ribosomal subunit protein uL5 (178 aa).

The protein belongs to the universal ribosomal protein uL5 family. In terms of assembly, part of the 50S ribosomal subunit; part of the 5S rRNA/L5/L18/L25 subcomplex. Contacts the 5S rRNA and the P site tRNA. Forms a bridge to the 30S subunit in the 70S ribosome.

This is one of the proteins that bind and probably mediate the attachment of the 5S RNA into the large ribosomal subunit, where it forms part of the central protuberance. In the 70S ribosome it contacts protein S13 of the 30S subunit (bridge B1b), connecting the 2 subunits; this bridge is implicated in subunit movement. Contacts the P site tRNA; the 5S rRNA and some of its associated proteins might help stabilize positioning of ribosome-bound tRNAs. This chain is Large ribosomal subunit protein uL5, found in Acinetobacter baumannii (strain AB0057).